Here is a 526-residue protein sequence, read N- to C-terminus: Na(+)/H(+) antiporter NhaB (526 aa).

Helical transmembrane passes span 25 to 45 (IIAFLIFNPILFMADPYIAGW), 52 to 72 (IFTLAMALKCYPLQPGGLLLI), 89 to 109 (IVVNIEVVLLLVFMVAGIYFM), 139 to 159 (AFLSAFLDALTVVAVIIAVGM), 204 to 224 (LMMHAAVGTALGGVMTMVGEP), 240 to 260 (FFVRMSPVTIPVFFAGIATTF), 305 to 325 (GFIGIWLVIGLAGHFAAVGLI), 355 to 375 (FTALLCVFFGVVAVIIDQGLF), 391 to 411 (LVMFYLANGALSMVSDNVFVG), 448 to 468 (VATPNGQAAFLFLLTSAIAPL), and 479 to 499 (MALPYTIVLTIVGLAATYFGL).

The protein belongs to the NhaB Na(+)/H(+) (TC 2.A.34) antiporter family.

It is found in the cell inner membrane. The catalysed reaction is 2 Na(+)(in) + 3 H(+)(out) = 2 Na(+)(out) + 3 H(+)(in). Its function is as follows. Na(+)/H(+) antiporter that extrudes sodium in exchange for external protons. The polypeptide is Na(+)/H(+) antiporter NhaB (Pseudoalteromonas atlantica (strain T6c / ATCC BAA-1087)).